Reading from the N-terminus, the 467-residue chain is UTP--glucose-1-phosphate uridylyltransferase (467 aa).

UTP is bound by residues 83-86 (LNGG), lysine 97, glutamine 160, and glycine 189. 85–86 (GG) is a binding site for substrate. Residues histidine 190 and 218 to 220 (NSD) contribute to the substrate site. 2 residues coordinate UTP: aspartate 220 and lysine 358.

Belongs to the UDPGP type 1 family.

The protein localises to the cytoplasm. It catalyses the reaction alpha-D-glucose 1-phosphate + UTP + H(+) = UDP-alpha-D-glucose + diphosphate. Its function is as follows. Plays a central role as a glucosyl donor in cellular metabolic pathways. The chain is UTP--glucose-1-phosphate uridylyltransferase (UGPA) from Musa acuminata (Banana).